The following is a 470-amino-acid chain: Uronate isomerase (470 aa).

It belongs to the metallo-dependent hydrolases superfamily. Uronate isomerase family.

The catalysed reaction is D-glucuronate = D-fructuronate. It catalyses the reaction aldehydo-D-galacturonate = keto-D-tagaturonate. It participates in carbohydrate metabolism; pentose and glucuronate interconversion. This is Uronate isomerase from Vibrio parahaemolyticus serotype O3:K6 (strain RIMD 2210633).